The chain runs to 190 residues: Protein A52 (190 aa).

It belongs to the orthopoxvirus A52R protein family. Interacts with host TRAF6 and IRAK2.

Its function is as follows. Bcl-2-like protein which targets host toll-like receptor signaling complexes to suppress innate immune response. Interacts with host TRAF6 to activate p38 and subsequently induce the expression of several cytokines such as IL-10. Also associates with host IRAK2 to inhibit NF-kappa-B signaling. This chain is Protein A52, found in Vaccinia virus (strain Western Reserve) (VACV).